The following is a 417-amino-acid chain: Probable serine incorporator (417 aa).

10 helical membrane passes run 25–45 (VYVVFFLLVSIVAYILSYWTF), 69–89 (VVYRLTFGLALYHILLGLVMI), 104–124 (GYWPLKILLLGVLIFVSFFIP), 131–151 (YTWISIFSAAIFIFIQLVLLI), 180–200 (CVLSFGSIALAVAGTVLMLVF), 208–228 (INQFYIVFNLGICLIVGVLSI), 239–259 (SGLFQSGVVMLYCTYLIYSAI), 276–296 (KESTIIIGAVFTIISVCYSAF), 339–359 (FFHFTFACGAMYLSALLTNWA), and 391–411 (VVSSWVVVLLYLWTLIGPILL).

This sequence belongs to the TDE1 family.

It localises to the endoplasmic reticulum membrane. In terms of biological role, enhances the incorporation of serine into phosphatidylserine and sphingolipids. The chain is Probable serine incorporator (serinc) from Dictyostelium discoideum (Social amoeba).